A 408-amino-acid chain; its full sequence is MYDTGQEAPRCILVGRKTGREETSSLPELSLLVEELGYIPETILSFPLRTPERKFLFGPGQAEVVAREARMRGIELVVFDEDLTPAQQRNWEHLVKSRVMDRTEVIIEIFSRHARTKQAQLQTEKARLEYLLPRLRGAWSHLDRQRGGARGTRGEGERQIELDRRMILSRLARIRREMEAIERHQTTTRSRRLEAGIPRVSLVGYTNAGKSSLFTRLTGQAVRIQDRPFVTLDTTTRTCLIPGWGRVVVSDTVGFIQHLPHTLVDAFHATLEEVRDAHLLLEVVDLSSPNLLLHLSTTEEVLTEIGAHHIPRIRVYNKADRSSPHPLLPPSDHPEILVSAKTGEGIEGLLSLIVREMERHYPIETLELPYHRLGESHEVLSRAVIIHQEYTDVGLFVRYAPSVPSVHE.

The Hflx-type G domain occupies 198–361 (PRVSLVGYTN…LIVREMERHY (164 aa)). GTP is bound by residues 204–211 (GYTNAGKS), 229–233 (FVTLD), 251–254 (DTVG), 317–320 (NKAD), and 339–341 (SAK). Serine 211 and threonine 231 together coordinate Mg(2+).

This sequence belongs to the TRAFAC class OBG-HflX-like GTPase superfamily. HflX GTPase family. As to quaternary structure, monomer. Associates with the 50S ribosomal subunit. Mg(2+) serves as cofactor.

Its subcellular location is the cytoplasm. Its function is as follows. GTPase that associates with the 50S ribosomal subunit and may have a role during protein synthesis or ribosome biogenesis. This is GTPase HflX from Spirochaeta thermophila (strain ATCC 49972 / DSM 6192 / RI 19.B1).